The following is a 245-amino-acid chain: MIIPALDLIDGQVVRLHQGDYGQQRQYGSDPLPRLQDYQQQGAGVLHLVDLTGAKNPSARQIPLLTTLLAGVSVPVQIGGGIRTEQDVEALLKAGASRVVIGSTAVKQPELVQQWFTRYGAEALVLALDVRIDANGTKYVAISGWQENSDATLEQIVEQYLPFGLKHVLCTDISRDGTLSGSNVELYREISQRYPQIAFQASGGIGNLTDIANLRSSGVQGVIVGRALLEGKFNVAEAISCWQNG.

Asp7 serves as the catalytic Proton acceptor. Asp129 serves as the catalytic Proton donor.

This sequence belongs to the HisA/HisF family.

Its subcellular location is the cytoplasm. The catalysed reaction is 1-(5-phospho-beta-D-ribosyl)-5-[(5-phospho-beta-D-ribosylamino)methylideneamino]imidazole-4-carboxamide = 5-[(5-phospho-1-deoxy-D-ribulos-1-ylimino)methylamino]-1-(5-phospho-beta-D-ribosyl)imidazole-4-carboxamide. It participates in amino-acid biosynthesis; L-histidine biosynthesis; L-histidine from 5-phospho-alpha-D-ribose 1-diphosphate: step 4/9. This is 1-(5-phosphoribosyl)-5-[(5-phosphoribosylamino)methylideneamino] imidazole-4-carboxamide isomerase from Pectobacterium atrosepticum (strain SCRI 1043 / ATCC BAA-672) (Erwinia carotovora subsp. atroseptica).